A 141-amino-acid chain; its full sequence is Nucleoside diphosphate kinase (141 aa).

ATP-binding residues include K9, F57, R85, T91, R102, and N112. H115 functions as the Pros-phosphohistidine intermediate in the catalytic mechanism.

Belongs to the NDK family. As to quaternary structure, homotetramer. Requires Mg(2+) as cofactor.

The protein localises to the cytoplasm. The enzyme catalyses a 2'-deoxyribonucleoside 5'-diphosphate + ATP = a 2'-deoxyribonucleoside 5'-triphosphate + ADP. The catalysed reaction is a ribonucleoside 5'-diphosphate + ATP = a ribonucleoside 5'-triphosphate + ADP. In terms of biological role, major role in the synthesis of nucleoside triphosphates other than ATP. The ATP gamma phosphate is transferred to the NDP beta phosphate via a ping-pong mechanism, using a phosphorylated active-site intermediate. The protein is Nucleoside diphosphate kinase of Chlamydia caviae (strain ATCC VR-813 / DSM 19441 / 03DC25 / GPIC) (Chlamydophila caviae).